A 44-amino-acid chain; its full sequence is Protein non-structural 7b (44 aa).

The helical transmembrane segment at 9–29 (FYLCFLAFLLFLVLIMLIIFW) threads the bilayer.

It is found in the host membrane. The chain is Protein non-structural 7b from Homo sapiens (Human).